Consider the following 557-residue polypeptide: Formate--tetrahydrofolate ligase 2 (557 aa).

Residue 66-73 coordinates ATP; that stretch reads TPAGEGKT.

This sequence belongs to the formate--tetrahydrofolate ligase family.

The enzyme catalyses (6S)-5,6,7,8-tetrahydrofolate + formate + ATP = (6R)-10-formyltetrahydrofolate + ADP + phosphate. It functions in the pathway one-carbon metabolism; tetrahydrofolate interconversion. The chain is Formate--tetrahydrofolate ligase 2 from Streptococcus pyogenes serotype M3 (strain ATCC BAA-595 / MGAS315).